A 473-amino-acid chain; its full sequence is Photosystem II CP43 reaction center protein (473 aa).

Positions 1 to 14 are excised as a propeptide; that stretch reads MKTLYSLRRFYPVE. The residue at position 15 (T15) is an N-acetylthreonine. At T15 the chain carries Phosphothreonine. Transmembrane regions (helical) follow at residues 69-93, 134-155, 178-200, 255-275, and 291-312; these read LFEV…PHLA, LLGP…KDRN, KALY…RKIT, KPFA…LSYS, and WFNN…ASQA. Residue E367 coordinates [CaMn4O5] cluster. A helical transmembrane segment spans residues 447–471; that stretch reads RARAAAAGFEKGIDRDFEPVLSMTP.

It belongs to the PsbB/PsbC family. PsbC subfamily. As to quaternary structure, PSII is composed of 1 copy each of membrane proteins PsbA, PsbB, PsbC, PsbD, PsbE, PsbF, PsbH, PsbI, PsbJ, PsbK, PsbL, PsbM, PsbT, PsbX, PsbY, PsbZ, Psb30/Ycf12, at least 3 peripheral proteins of the oxygen-evolving complex and a large number of cofactors. It forms dimeric complexes. Requires Binds multiple chlorophylls and provides some of the ligands for the Ca-4Mn-5O cluster of the oxygen-evolving complex. It may also provide a ligand for a Cl- that is required for oxygen evolution. PSII binds additional chlorophylls, carotenoids and specific lipids. as cofactor.

The protein localises to the plastid. It localises to the chloroplast thylakoid membrane. One of the components of the core complex of photosystem II (PSII). It binds chlorophyll and helps catalyze the primary light-induced photochemical processes of PSII. PSII is a light-driven water:plastoquinone oxidoreductase, using light energy to abstract electrons from H(2)O, generating O(2) and a proton gradient subsequently used for ATP formation. The sequence is that of Photosystem II CP43 reaction center protein from Liriodendron tulipifera (Tuliptree).